We begin with the raw amino-acid sequence, 396 residues long: Inositol polyphosphate multikinase (396 aa).

The segment covering 1-13 (MAAEPPALRLRPP) has biased composition (low complexity). Residues 1–22 (MAAEPPALRLRPPGSTGDSPPV) are disordered. Ala2 carries the post-translational modification N-acetylalanine. The residue at position 19 (Ser19) is a Phosphoserine. Lys58 serves as a coordination point for ATP. Residue Arg65 participates in substrate binding. Residues 114–116 (EDV) and Asp127 contribute to the ATP site. Substrate is bound by residues Lys129, 143 to 150 (KIQQQVSK), and Gln179. Positions 300–310 (RHRKLYAKKHQ) match the Nuclear localization signal motif. Asp365 provides a ligand contact to ATP.

The protein belongs to the inositol phosphokinase (IPK) family. The cofactor is Mg(2+).

It is found in the nucleus. The catalysed reaction is 1D-myo-inositol 1,4,5-trisphosphate + 2 ATP = 1D-myo-inositol 1,3,4,5,6-pentakisphosphate + 2 ADP + 2 H(+). It catalyses the reaction 1D-myo-inositol 1,3,4,6-tetrakisphosphate + ATP = 1D-myo-inositol 1,3,4,5,6-pentakisphosphate + ADP + H(+). The enzyme catalyses 1-octadecanoyl-2-(5Z,8Z,11Z,14Z)-eicosatetraenoyl-sn-glycero-3-phospho-1D-myo-inositol 4,5-bisphosphate + ATP = 1-octadecanoyl-2-(5Z,8Z,11Z,14Z-eicosatetraenoyl)-sn-glycero-3-phospho-(1D-myo-inositol 3,4,5-triphosphate) + ADP + H(+). It carries out the reaction a 1,2-diacyl-sn-glycero-3-phospho-(1D-myo-inositol-4,5-bisphosphate) + ATP = a 1,2-diacyl-sn-glycero-3-phospho-(1D-myo-inositol-3,4,5-trisphosphate) + ADP + H(+). The catalysed reaction is 1D-myo-inositol 1,4,5,6-tetrakisphosphate + ATP = 1D-myo-inositol 1,3,4,5,6-pentakisphosphate + ADP + H(+). It functions in the pathway phospholipid metabolism; phosphatidylinositol metabolism. In terms of biological role, inositol phosphate kinase with a broad substrate specificity. Phosphorylates inositol 1,4,5-trisphosphate (Ins(1,4,5)P3) first to inositol 1,3,4,5-tetrakisphosphate and then to inositol 1,3,4,5,6-pentakisphosphate (Ins(1,3,4,5,6)P5). Phosphorylates inositol 1,3,4,6-tetrakisphosphate (Ins(1,3,4,6)P4). Phosphorylates inositol 1,4,5,6-tetrakisphosphate (Ins(1,4,5,6)P4). Phosphorylates glycero-3-phospho-1D-myo-inositol 4,5-bisphosphate to glycero-3-phospho-1D-myo-inositol 3,4,5-trisphosphate. Plays an important role in MLKL-mediated necroptosis via its role in the biosynthesis of inositol pentakisphosphate (InsP5) and inositol hexakisphosphate (InsP6). Binding of these highly phosphorylated inositol phosphates to MLKL mediates the release of an N-terminal auto-inhibitory region, leading to activation of the kinase. Essential for activated phospho-MLKL to oligomerize and localize to the cell membrane during necroptosis. Required for normal embryonic development, probably via its role in the biosynthesis of inositol 1,3,4,5,6-pentakisphosphate (Ins(1,3,4,5,6)P5) and inositol hexakisphosphate (InsP6). The chain is Inositol polyphosphate multikinase (Ipmk) from Mus musculus (Mouse).